A 559-amino-acid chain; its full sequence is Formate--tetrahydrofolate ligase (559 aa).

ATP is bound at residue 68 to 75 (TPAGEGKT).

The protein belongs to the formate--tetrahydrofolate ligase family.

The enzyme catalyses (6S)-5,6,7,8-tetrahydrofolate + formate + ATP = (6R)-10-formyltetrahydrofolate + ADP + phosphate. Its pathway is one-carbon metabolism; tetrahydrofolate interconversion. The protein is Formate--tetrahydrofolate ligase of Sinorhizobium fredii (strain NBRC 101917 / NGR234).